The sequence spans 487 residues: Ribosomal protein uS12 methylthiotransferase RimO (487 aa).

One can recognise an MTTase N-terminal domain in the interval 38 to 149 (PTVAFAHLGC…IVEVLEQVEA (112 aa)). Residues Cys-47, Cys-83, Cys-112, Cys-187, Cys-191, and Cys-194 each contribute to the [4Fe-4S] cluster site. One can recognise a Radical SAM core domain in the interval 173 to 402 (TTSEAVAYLK…MEAQQAISAE (230 aa)). The region spanning 405 to 476 (GAWVGRIVDV…IYDLEGEVVG (72 aa)) is the TRAM domain.

Belongs to the methylthiotransferase family. RimO subfamily. [4Fe-4S] cluster is required as a cofactor.

The protein resides in the cytoplasm. It carries out the reaction L-aspartate(89)-[ribosomal protein uS12]-hydrogen + (sulfur carrier)-SH + AH2 + 2 S-adenosyl-L-methionine = 3-methylsulfanyl-L-aspartate(89)-[ribosomal protein uS12]-hydrogen + (sulfur carrier)-H + 5'-deoxyadenosine + L-methionine + A + S-adenosyl-L-homocysteine + 2 H(+). Its function is as follows. Catalyzes the methylthiolation of an aspartic acid residue of ribosomal protein uS12. The protein is Ribosomal protein uS12 methylthiotransferase RimO of Synechococcus sp. (strain RCC307).